The following is an 817-amino-acid chain: Kinesin-like protein 2 (817 aa).

A disordered region spans residues 1–155; it reads MEEEGHKSLT…YNDEKSVNAS (155 aa). Positions 8 to 23 are enriched in low complexity; that stretch reads SLTSHLPQSSSSLSQS. Residues 39–60 show a composition bias toward polar residues; the sequence is IKTNSSSSNILKPRLSLQNEVN. A compositionally biased stretch (low complexity) spans 76 to 86; it reads SLASVKSSSLA. The span at 106-116 shows a compositional bias: polar residues; that stretch reads PISSRSVSASS. The span at 122–132 shows a compositional bias: low complexity; that stretch reads ASAVSSSLNSS. Positions 155–242 form a coiled coil; the sequence is SALRTTEDRL…VSQKGMESLE (88 aa). ATP contacts are provided by Asn473, Arg475, Arg479, Glu543, Gly566, Ser567, Gly568, Lys569, Thr570, and Thr778. A Kinesin motor domain is found at 473 to 807; the sequence is NIRVFCRVRP…LRFATKVNNT (335 aa).

The protein belongs to the TRAFAC class myosin-kinesin ATPase superfamily. Kinesin family. NCD subfamily.

Its subcellular location is the cytoplasm. It localises to the cytoskeleton. It is found in the spindle. The protein resides in the nucleus. It catalyses the reaction ATP + H2O = ADP + phosphate + H(+). The enzyme catalyses ATP + H2O + a kinesin associated with a microtubule at position (n) = ADP + phosphate + a kinesin associated with a microtubule at position (n-1, toward the minus end).. Minus end-directed microtubule (MT) motor that is involved in spindle microtubule shortening, kinetochore capture, and polarization of cytoplasmic microtubules. During mitosis, promotes spindle microtubule shortening by depolymerization. During metaphase, involved in the recapture of kinetochores displaced from the spindle and their transport towards the spindle pole body; promotes transport both by microtubule end-on pulling and by lateral sliding along the side of the microtubule. During interphase, required for the polarization of cytoplasmic microtubules where it orients the microtubule plus ends toward the cell ends and the minus ends toward the cell center. Required for karyogamy. The polypeptide is Kinesin-like protein 2 (Schizosaccharomyces pombe (strain 972 / ATCC 24843) (Fission yeast)).